The primary structure comprises 414 residues: Mannan endo-1,4-beta-mannosidase 2 (414 aa).

The signal sequence occupies residues 1–25 (MAYFQRLISCIFVLFLLSLAFACEA). 2 residues coordinate substrate: W95 and N210. E211 serves as the catalytic Proton donor. Residue Y288 participates in substrate binding. The Nucleophile role is filled by E328. Residue W370 participates in substrate binding.

It belongs to the glycosyl hydrolase 5 (cellulase A) family.

The protein localises to the secreted. It carries out the reaction Random hydrolysis of (1-&gt;4)-beta-D-mannosidic linkages in mannans, galactomannans and glucomannans.. Functionally, possesses endo-beta-mannanase activity in vitro. May be involved in seed germination by weakening the endosperm cap prior to radicle emergence. This chain is Mannan endo-1,4-beta-mannosidase 2 (MAN2), found in Solanum lycopersicum (Tomato).